The chain runs to 387 residues: 3-ketoacyl-CoA thiolase (387 aa).

The Acyl-thioester intermediate role is filled by cysteine 91. Residues histidine 343 and cysteine 373 each act as proton acceptor in the active site.

It belongs to the thiolase-like superfamily. Thiolase family. Heterotetramer of two alpha chains (FadB) and two beta chains (FadA).

It localises to the cytoplasm. The catalysed reaction is an acyl-CoA + acetyl-CoA = a 3-oxoacyl-CoA + CoA. Its pathway is lipid metabolism; fatty acid beta-oxidation. Functionally, catalyzes the final step of fatty acid oxidation in which acetyl-CoA is released and the CoA ester of a fatty acid two carbons shorter is formed. The chain is 3-ketoacyl-CoA thiolase from Aliivibrio salmonicida (strain LFI1238) (Vibrio salmonicida (strain LFI1238)).